The primary structure comprises 559 residues: Urocanate hydratase (559 aa).

Residues 53 to 54 (GG), Q131, 177 to 179 (GMG), E197, R202, 243 to 244 (NA), 264 to 268 (QTSAH), 274 to 275 (YL), and Y323 each bind NAD(+). C411 is a catalytic residue. G493 contributes to the NAD(+) binding site.

It belongs to the urocanase family. The cofactor is NAD(+).

The protein resides in the cytoplasm. It carries out the reaction 4-imidazolone-5-propanoate = trans-urocanate + H2O. The protein operates within amino-acid degradation; L-histidine degradation into L-glutamate; N-formimidoyl-L-glutamate from L-histidine: step 2/3. Catalyzes the conversion of urocanate to 4-imidazolone-5-propionate. This is Urocanate hydratase from Pseudomonas paraeruginosa (strain DSM 24068 / PA7) (Pseudomonas aeruginosa (strain PA7)).